The primary structure comprises 206 residues: ATP-dependent Clp protease proteolytic subunit (206 aa).

The Nucleophile role is filled by serine 101. Histidine 126 is an active-site residue.

Belongs to the peptidase S14 family. Component of the chloroplastic Clp protease core complex.

It localises to the plastid. It is found in the chloroplast stroma. It carries out the reaction Hydrolysis of proteins to small peptides in the presence of ATP and magnesium. alpha-casein is the usual test substrate. In the absence of ATP, only oligopeptides shorter than five residues are hydrolyzed (such as succinyl-Leu-Tyr-|-NHMec, and Leu-Tyr-Leu-|-Tyr-Trp, in which cleavage of the -Tyr-|-Leu- and -Tyr-|-Trp bonds also occurs).. Functionally, cleaves peptides in various proteins in a process that requires ATP hydrolysis. Has a chymotrypsin-like activity. Plays a major role in the degradation of misfolded proteins. This Solanum lycopersicum (Tomato) protein is ATP-dependent Clp protease proteolytic subunit.